Reading from the N-terminus, the 307-residue chain is MAGQSGRTFPRVAVLMGGASTEREVSLSSGHSCSAALRDAGYEVTEVDAGPDLARVLAELSPDAVFNALHGRWGEDGCVQGLLEWLRIPYTHSGVLASALAMDKARAKEVFAAAGLPVTQSVLATPEEVRARHILPPPYVVKPNAEGSSVGVYIVHEDANGPPQLAADMPQDLMVETYVPGRELTVTVMGDRVLAVTDILSDGWYDYDAKYRPGGSRHIVPADLPAEITEACHDIALRAHRALGCRGISRSDLRWDEARGLAGLILLETNTQPGMTPTSLSPEQAAHCGYSFPEFCAWLVEDASCSR.

Residues 108–301 enclose the ATP-grasp domain; that stretch reads KEVFAAAGLP…FPEFCAWLVE (194 aa). 135–185 is an ATP binding site; sequence LPPPYVVKPNAEGSSVGVYIVHEDANGPPQLAADMPQDLMVETYVPGRELT. Residues D252, E268, and N270 each coordinate Mg(2+).

This sequence belongs to the D-alanine--D-alanine ligase family. Mg(2+) serves as cofactor. It depends on Mn(2+) as a cofactor.

The protein localises to the cytoplasm. It catalyses the reaction 2 D-alanine + ATP = D-alanyl-D-alanine + ADP + phosphate + H(+). The protein operates within cell wall biogenesis; peptidoglycan biosynthesis. In terms of biological role, cell wall formation. This chain is D-alanine--D-alanine ligase, found in Cereibacter sphaeroides (strain ATCC 17029 / ATH 2.4.9) (Rhodobacter sphaeroides).